Here is a 436-residue protein sequence, read N- to C-terminus: 3-ketoacyl-CoA thiolase (436 aa).

C99 functions as the Acyl-thioester intermediate in the catalytic mechanism. Active-site proton acceptor residues include H392 and C422.

This sequence belongs to the thiolase-like superfamily. Thiolase family. Heterotetramer of two alpha chains (FadJ) and two beta chains (FadI).

It is found in the cytoplasm. The enzyme catalyses an acyl-CoA + acetyl-CoA = a 3-oxoacyl-CoA + CoA. Its pathway is lipid metabolism; fatty acid beta-oxidation. Catalyzes the final step of fatty acid oxidation in which acetyl-CoA is released and the CoA ester of a fatty acid two carbons shorter is formed. The sequence is that of 3-ketoacyl-CoA thiolase from Shewanella baltica (strain OS185).